A 357-amino-acid polypeptide reads, in one-letter code: Eukaryotic translation initiation factor 3 subunit F (357 aa).

The interval 1–82 (MATPAVPVSA…PAPALPGPAL (82 aa)) is disordered. Position 2 is an N-acetylalanine (A2). The segment covering 9–36 (SAPPATPTPVPAAAPASVPAPTPAPAAA) has biased composition (pro residues). Over residues 37–74 (PVPAAAPASSSDPAAAAAATAAPGQTPASAQAPAQTPA) the composition is skewed to low complexity. Phosphoserine; by CDK11; in vitro is present on S46. The MPN domain maps to 92–222 (VRLHPVILAS…IKAYVSTLMG (131 aa)). Residue K238 is modified to N6-acetyllysine. S258 bears the Phosphoserine mark.

This sequence belongs to the eIF-3 subunit F family. Component of the eukaryotic translation initiation factor 3 (eIF-3) complex, which is composed of 13 subunits: EIF3A, EIF3B, EIF3C, EIF3D, EIF3E, EIF3F, EIF3G, EIF3H, EIF3I, EIF3J, EIF3K, EIF3L and EIF3M. The eIF-3 complex appears to include 3 stable modules: module A is composed of EIF3A, EIF3B, EIF3G and EIF3I; module B is composed of EIF3F, EIF3H, and EIF3M; and module C is composed of EIF3C, EIF3D, EIF3E, EIF3K and EIF3L. EIF3C of module C binds EIF3B of module A and EIF3H of module B, thereby linking the three modules. EIF3J is a labile subunit that binds to the eIF-3 complex via EIF3B. The eIF-3 complex interacts with RPS6KB1 under conditions of nutrient depletion. Mitogenic stimulation leads to binding and activation of a complex composed of MTOR and RPTOR, leading to phosphorylation and release of RPS6KB1 and binding of EIF4B to eIF-3. Interacts with RNF139; the interaction leads to protein translation inhibitions in a ubiquitination-dependent manner. Interacts with DTX1, the interaction is required for deubiquitinating activity towards NOTCH1. In terms of processing, phosphorylation is enhanced upon serum stimulation. Phosphorylated during apoptosis by caspase-processed CDK11.

It localises to the cytoplasm. It catalyses the reaction Thiol-dependent hydrolysis of ester, thioester, amide, peptide and isopeptide bonds formed by the C-terminal Gly of ubiquitin (a 76-residue protein attached to proteins as an intracellular targeting signal).. Its function is as follows. Component of the eukaryotic translation initiation factor 3 (eIF-3) complex, which is required for several steps in the initiation of protein synthesis. The eIF-3 complex associates with the 40S ribosome and facilitates the recruitment of eIF-1, eIF-1A, eIF-2:GTP:methionyl-tRNAi and eIF-5 to form the 43S pre-initiation complex (43S PIC). The eIF-3 complex stimulates mRNA recruitment to the 43S PIC and scanning of the mRNA for AUG recognition. The eIF-3 complex is also required for disassembly and recycling of post-termination ribosomal complexes and subsequently prevents premature joining of the 40S and 60S ribosomal subunits prior to initiation. The eIF-3 complex specifically targets and initiates translation of a subset of mRNAs involved in cell proliferation, including cell cycling, differentiation and apoptosis, and uses different modes of RNA stem-loop binding to exert either translational activation or repression. Functionally, deubiquitinates activated NOTCH1, promoting its nuclear import, thereby acting as a positive regulator of Notch signaling. This chain is Eukaryotic translation initiation factor 3 subunit F, found in Homo sapiens (Human).